A 332-amino-acid polypeptide reads, in one-letter code: Fructose-1,6-bisphosphatase class 1 (332 aa).

Glutamate 91, aspartate 112, leucine 114, and aspartate 115 together coordinate Mg(2+). Substrate contacts are provided by residues 115 to 118 (DGSS), asparagine 208, tyrosine 241, and lysine 271. Residue glutamate 277 coordinates Mg(2+).

Belongs to the FBPase class 1 family. Homotetramer. The cofactor is Mg(2+).

It localises to the cytoplasm. It catalyses the reaction beta-D-fructose 1,6-bisphosphate + H2O = beta-D-fructose 6-phosphate + phosphate. Its pathway is carbohydrate biosynthesis; Calvin cycle. This Chlorobium phaeobacteroides (strain DSM 266 / SMG 266 / 2430) protein is Fructose-1,6-bisphosphatase class 1.